We begin with the raw amino-acid sequence, 169 residues long: MGLFDKLKSLVSDDKKDTGTIEIIAPLSGEIVNIEDVPDVVFAEKIVGDGIAIKPTGNKMVAPVDGTIGKIFETNHAFSIESDSGVELFVHFGIDTVELKGEGFKRIAEEGQRVKVGDTVIEFDLPLLEEKAKSTLTPVVISNMDEIKELIKLSGSVTVGETPVIRIKK.

Positions 39–143 constitute a PTS EIIA type-1 domain; the sequence is DVVFAEKIVG…STLTPVVISN (105 aa). Zn(2+)-binding residues include His76 and His91. His91 functions as the Tele-phosphohistidine intermediate; for EIIA activity in the catalytic mechanism. His91 is modified (phosphohistidine; by HPr).

In terms of assembly, heterodimer with glycerol kinase (glpk). Requires Zn(2+) as cofactor.

The protein resides in the cytoplasm. Functionally, the phosphoenolpyruvate-dependent sugar phosphotransferase system (sugar PTS), a major carbohydrate active transport system, catalyzes the phosphorylation of incoming sugar substrates concomitantly with their translocation across the cell membrane. The enzyme II complex composed of PtsG and Crr is involved in glucose transport. The sequence is that of PTS system glucose-specific EIIA component (crr) from Escherichia coli O6:H1 (strain CFT073 / ATCC 700928 / UPEC).